The primary structure comprises 297 residues: MDLSKLTTEARNKRTMNLDRMTIHEFATIMNQEDQSVPLSVANSLATIENAIDSITKHFKQGGRLFYIGAGTSGRLGVLDAVECVPTFGIEAEMVRGLIAGGPSAMTLAVEGAEDDDKLASSDLKKRALTAADVVVGIAASGRTPYVIGGLDYADSLGAATISLACNQNSEISKHAQIAIEVPVGPEILTGSTRLKAGTAQKLVLNMLSTGAMVGIGKVYKNLMVDVRPTNEKLLIRSKRIICQATNCDEATAAEVFEKADRNVKLAIVMILTNLPKKEANEQLRKADGFISKTIPE.

An SIS domain is found at 55–218; that stretch reads ITKHFKQGGR…STGAMVGIGK (164 aa). Glutamate 83 serves as the catalytic Proton donor. Residue glutamate 114 is part of the active site.

This sequence belongs to the GCKR-like family. MurNAc-6-P etherase subfamily. Homodimer.

It carries out the reaction N-acetyl-D-muramate 6-phosphate + H2O = N-acetyl-D-glucosamine 6-phosphate + (R)-lactate. Its pathway is amino-sugar metabolism; N-acetylmuramate degradation. Functionally, specifically catalyzes the cleavage of the D-lactyl ether substituent of MurNAc 6-phosphate, producing GlcNAc 6-phosphate and D-lactate. This chain is N-acetylmuramic acid 6-phosphate etherase, found in Oenococcus oeni (strain ATCC BAA-331 / PSU-1).